The chain runs to 362 residues: Inactive 2'-5' oligoadenylate synthetase 1C (362 aa).

The protein belongs to the 2-5A synthase family. In terms of tissue distribution, expressed at highest level in brain with lesser amounts in spleen, kidney, stomach, liver, intestine, ovary, skin and testis. Not detected in lung, thymus, heart and uterus.

Does not have 2'-5'-OAS activity, but can bind double-stranded RNA. The chain is Inactive 2'-5' oligoadenylate synthetase 1C from Mus musculus (Mouse).